A 352-amino-acid polypeptide reads, in one-letter code: MAIDENKQKALAAALGQIEKQFGKGSIMRLGEDRTMDVETISTGSLSLDIALGAGGLPMGRIVEIYGPESSGKTTLTLQVIAAAQREGKTCAFIDAEHALDPVYARKLGVDIDNLLCSQPDTGEQALEICDALARSGAVDVIVVDSVAALTPKAEIEGEIGDSHMGLAARMMSQAMRKLAGNLKQSNTLLIFINQIRMKIGVMFGNPETTTGGNALKFYASVRLDIRRIGAVKEGDNVVGSETRVKVVKNKIAAPFKQAEFQILYGEGINFYGELVDLGVKEKLIEKAGAWYSYNGDKIGQGKANAITWLKENPAAAKEIEKKVRELLLNNQDAKPDFVVDGNDAEETEQDF.

Residue 67–74 participates in ATP binding; that stretch reads GPESSGKT.

This sequence belongs to the RecA family.

It localises to the cytoplasm. In terms of biological role, can catalyze the hydrolysis of ATP in the presence of single-stranded DNA, the ATP-dependent uptake of single-stranded DNA by duplex DNA, and the ATP-dependent hybridization of homologous single-stranded DNAs. It interacts with LexA causing its activation and leading to its autocatalytic cleavage. This chain is Protein RecA, found in Klebsiella pneumoniae subsp. pneumoniae (strain ATCC 700721 / MGH 78578).